We begin with the raw amino-acid sequence, 456 residues long: Heme sensor protein HssS (456 aa).

The next 2 helical transmembrane spans lie at 9 to 29 (IAIY…LFAN) and 164 to 184 (TFLA…VIAS). The region spanning 186-238 (YSIIKPIKILKQATERLMHGDFNSPIYQSRHDEIGTLQYRFEAMRQSLKQVDD) is the HAMP domain. The 211-residue stretch at 246–456 (NVSHEIKTPL…TFTVTLPETN (211 aa)) folds into the Histidine kinase domain. Phosphohistidine; by autocatalysis is present on His-249.

Autophosphorylated.

The protein localises to the cell membrane. It catalyses the reaction ATP + protein L-histidine = ADP + protein N-phospho-L-histidine.. In terms of biological role, member of the two-component regulatory system HssS/HssR involved in intracellular heme homeostasis and tempering of staphylococcal virulence. HssS functions as a heme sensor histidine kinase which is autophosphorylated at a histidine residue and transfers its phosphate group to an aspartate residue of HssR. HssR/HssS activates the expression of hrtAB, an efflux pump, in response to extracellular heme, hemin, hemoglobin or blood. The sequence is that of Heme sensor protein HssS (hssS) from Staphylococcus haemolyticus (strain JCSC1435).